The primary structure comprises 128 residues: Azurin (128 aa).

The Plastocyanin-like domain occupies 1–128 (AECKVTVDST…SMMKGTVTVK (128 aa)). The cysteines at positions 3 and 26 are disulfide-linked. Cu cation is bound by residues H46, C112, H117, and M121.

It localises to the periplasm. Functionally, transfers electrons from cytochrome c551 to cytochrome oxidase. The sequence is that of Azurin from Pseudomonas fluorescens biotype A.